A 62-amino-acid polypeptide reads, in one-letter code: Small ribosomal subunit protein bS21 (62 aa).

Basic and acidic residues predominate over residues 43 to 52 (VKKKLKSEAA). A disordered region spans residues 43–62 (VKKKLKSEAARKRKAKKKRF). The segment covering 53 to 62 (RKRKAKKKRF) has biased composition (basic residues).

The protein belongs to the bacterial ribosomal protein bS21 family.

This Levilactobacillus brevis (strain ATCC 367 / BCRC 12310 / CIP 105137 / JCM 1170 / LMG 11437 / NCIMB 947 / NCTC 947) (Lactobacillus brevis) protein is Small ribosomal subunit protein bS21.